Reading from the N-terminus, the 64-residue chain is PYLa/PGLa B (64 aa).

The signal sequence occupies residues 1-20; sequence MYKQIFLCLIIAALCATIMA. Residues 21–35 constitute a propeptide that is removed on maturation; the sequence is EASALADADDDDDKR. Leu59 is subject to Leucine amide. The propeptide occupies 60 to 64; it reads GRRDS.

This sequence belongs to the gastrin/cholecystokinin family. Magainin subfamily. In terms of tissue distribution, expressed by the skin glands. Synthesized in the stomach and stored in a novel granular multinucleated cell in the gastric mucosa. Stored as active, processed peptides in large granules within the granular gland secretions of the skin.

It localises to the secreted. In terms of biological role, PGLa and PGLa-H display a broad-spectrum of antibacterial activity against a range of Gram-positive and Gram-negative bacteria. PGLa also displays antifungal activity against C.albicans ATCC 14053. PGLa-H shows moderate antibacterial activity against the multidrug-resistant methicillin-resistant S.aureus (MRSA) but exhibits very little hemolytic activity. The sequence is that of PYLa/PGLa B (pgla-b) from Xenopus laevis (African clawed frog).